Here is a 34-residue protein sequence, read N- to C-terminus: Conotoxin S4.3 (34 aa).

Pyrrolidone carboxylic acid is present on glutamine 1. Glutamate 3 is subject to 4-carboxyglutamate. Residue serine 7 is glycosylated (O-linked (HexNAc...) serine). Threonine 9 is a glycosylation site (O-linked (HexNAc...) threonine). Residues proline 17, proline 22, proline 31, and proline 32 each carry the 4-hydroxyproline modification.

The protein belongs to the conotoxin A superfamily. In terms of processing, contains 3 disulfide bonds. Expressed by the venom duct.

Its subcellular location is the secreted. Functionally, probable neurotoxin with ion channel inhibitor activity. The polypeptide is Conotoxin S4.3 (Conus striatus (Striated cone)).